The primary structure comprises 425 residues: Enolase (425 aa).

A (2R)-2-phosphoglycerate-binding site is contributed by Q162. E204 acts as the Proton donor in catalysis. Positions 241, 284, and 311 each coordinate Mg(2+). The (2R)-2-phosphoglycerate site is built by K336, R365, S366, and K387. K336 functions as the Proton acceptor in the catalytic mechanism.

It belongs to the enolase family. Requires Mg(2+) as cofactor.

It localises to the cytoplasm. The protein resides in the secreted. Its subcellular location is the cell surface. It carries out the reaction (2R)-2-phosphoglycerate = phosphoenolpyruvate + H2O. The protein operates within carbohydrate degradation; glycolysis; pyruvate from D-glyceraldehyde 3-phosphate: step 4/5. Catalyzes the reversible conversion of 2-phosphoglycerate (2-PG) into phosphoenolpyruvate (PEP). It is essential for the degradation of carbohydrates via glycolysis. The chain is Enolase from Brucella anthropi (strain ATCC 49188 / DSM 6882 / CCUG 24695 / JCM 21032 / LMG 3331 / NBRC 15819 / NCTC 12168 / Alc 37) (Ochrobactrum anthropi).